The following is a 268-amino-acid chain: 4-hydroxy-tetrahydrodipicolinate reductase (268 aa).

NAD(+) contacts are provided by residues 7 to 12 (GAGGRM) and glutamate 33. Arginine 34 provides a ligand contact to NADP(+). NAD(+) contacts are provided by residues 97-99 (GTT) and 121-124 (SGNM). The active-site Proton donor/acceptor is the histidine 155. Residue histidine 156 coordinates (S)-2,3,4,5-tetrahydrodipicolinate. The active-site Proton donor is lysine 159. 165-166 (GT) is a (S)-2,3,4,5-tetrahydrodipicolinate binding site.

The protein belongs to the DapB family.

The protein localises to the cytoplasm. It carries out the reaction (S)-2,3,4,5-tetrahydrodipicolinate + NAD(+) + H2O = (2S,4S)-4-hydroxy-2,3,4,5-tetrahydrodipicolinate + NADH + H(+). The catalysed reaction is (S)-2,3,4,5-tetrahydrodipicolinate + NADP(+) + H2O = (2S,4S)-4-hydroxy-2,3,4,5-tetrahydrodipicolinate + NADPH + H(+). It functions in the pathway amino-acid biosynthesis; L-lysine biosynthesis via DAP pathway; (S)-tetrahydrodipicolinate from L-aspartate: step 4/4. In terms of biological role, catalyzes the conversion of 4-hydroxy-tetrahydrodipicolinate (HTPA) to tetrahydrodipicolinate. The chain is 4-hydroxy-tetrahydrodipicolinate reductase from Brucella melitensis biotype 1 (strain ATCC 23456 / CCUG 17765 / NCTC 10094 / 16M).